The sequence spans 76 residues: Acyl carrier protein (76 aa).

Residues 1–75 (MVLEKIKTLM…DVVLYIEKNL (75 aa)) form the Carrier domain. An O-(pantetheine 4'-phosphoryl)serine modification is found at serine 35.

This sequence belongs to the acyl carrier protein (ACP) family. 4'-phosphopantetheine is transferred from CoA to a specific serine of apo-ACP by AcpS. This modification is essential for activity because fatty acids are bound in thioester linkage to the sulfhydryl of the prosthetic group.

The protein resides in the cytoplasm. Its pathway is lipid metabolism; fatty acid biosynthesis. Carrier of the growing fatty acid chain in fatty acid biosynthesis. The chain is Acyl carrier protein from Phytoplasma australiense.